A 79-amino-acid polypeptide reads, in one-letter code: Probable 26S proteasome complex subunit sem1 (79 aa).

Positions 1 to 21 (MSAPDKEKEKEKEETNNKSED) are enriched in basic and acidic residues. A disordered region spans residues 1 to 30 (MSAPDKEKEKEKEETNNKSEDLGLLEEDDE). The residue at position 19 (Ser-19) is a Phosphoserine.

The protein belongs to the DSS1/SEM1 family. As to quaternary structure, part of the 26S proteasome.

In terms of biological role, subunit of the 26S proteasome which plays a role in ubiquitin-dependent proteolysis. This is Probable 26S proteasome complex subunit sem1 from Drosophila melanogaster (Fruit fly).